A 119-amino-acid chain; its full sequence is Methylglyoxal synthase (119 aa).

The MGS-like domain occupies 1–119 (MRIALIAHDK…GTADLIIKQF (119 aa)). Substrate is bound by residues H8, K12, 34–37 (TGTT), and 54–55 (SG). D60 (proton donor/acceptor) is an active-site residue. Residue H87 coordinates substrate.

The protein belongs to the methylglyoxal synthase family.

It catalyses the reaction dihydroxyacetone phosphate = methylglyoxal + phosphate. In terms of biological role, catalyzes the formation of methylglyoxal from dihydroxyacetone phosphate. The sequence is that of Methylglyoxal synthase from Clostridium botulinum (strain Eklund 17B / Type B).